A 616-amino-acid chain; its full sequence is Proline--tRNA ligase (616 aa).

Belongs to the class-II aminoacyl-tRNA synthetase family. ProS type 1 subfamily. As to quaternary structure, homodimer.

The protein resides in the cytoplasm. The enzyme catalyses tRNA(Pro) + L-proline + ATP = L-prolyl-tRNA(Pro) + AMP + diphosphate. In terms of biological role, catalyzes the attachment of proline to tRNA(Pro) in a two-step reaction: proline is first activated by ATP to form Pro-AMP and then transferred to the acceptor end of tRNA(Pro). As ProRS can inadvertently accommodate and process non-cognate amino acids such as alanine and cysteine, to avoid such errors it has two additional distinct editing activities against alanine. One activity is designated as 'pretransfer' editing and involves the tRNA(Pro)-independent hydrolysis of activated Ala-AMP. The other activity is designated 'posttransfer' editing and involves deacylation of mischarged Ala-tRNA(Pro). The misacylated Cys-tRNA(Pro) is not edited by ProRS. The sequence is that of Proline--tRNA ligase from Lactococcus lactis subsp. lactis (strain IL1403) (Streptococcus lactis).